The chain runs to 478 residues: Glutamyl-tRNA reductase (478 aa).

Residues 49–52, S109, 114–116, and Q120 each bind substrate; these read TCNR and EQQ. The active-site Nucleophile is the C50. NADP(+) is bound at residue 191–196; it reads GAGSMG.

This sequence belongs to the glutamyl-tRNA reductase family. In terms of assembly, homodimer.

The catalysed reaction is (S)-4-amino-5-oxopentanoate + tRNA(Glu) + NADP(+) = L-glutamyl-tRNA(Glu) + NADPH + H(+). Its pathway is porphyrin-containing compound metabolism; protoporphyrin-IX biosynthesis; 5-aminolevulinate from L-glutamyl-tRNA(Glu): step 1/2. Its function is as follows. Catalyzes the NADPH-dependent reduction of glutamyl-tRNA(Glu) to glutamate 1-semialdehyde (GSA). This chain is Glutamyl-tRNA reductase, found in Rhodococcus opacus (strain B4).